The primary structure comprises 122 residues: MALTNEDIINAVSEMSVMQVVELIKAMEEKFGVTAAAATVAAAGPAAAAAEEQTEFTIVLAEAGDKKVNVIKVVRELTGLGLKEAKAVVDGAPGVVKEGASKEEAEAAKKALEEAGAKVELK.

This sequence belongs to the bacterial ribosomal protein bL12 family. Homodimer. Part of the ribosomal stalk of the 50S ribosomal subunit. Forms a multimeric L10(L12)X complex, where L10 forms an elongated spine to which 2 to 4 L12 dimers bind in a sequential fashion. Binds GTP-bound translation factors.

Its function is as follows. Forms part of the ribosomal stalk which helps the ribosome interact with GTP-bound translation factors. Is thus essential for accurate translation. The sequence is that of Large ribosomal subunit protein bL12 from Pseudomonas aeruginosa (strain LESB58).